The primary structure comprises 333 residues: Phenylalanine--tRNA ligase alpha subunit (333 aa).

Mg(2+) is bound at residue E254.

The protein belongs to the class-II aminoacyl-tRNA synthetase family. Phe-tRNA synthetase alpha subunit type 1 subfamily. In terms of assembly, tetramer of two alpha and two beta subunits. Mg(2+) serves as cofactor.

It localises to the cytoplasm. It catalyses the reaction tRNA(Phe) + L-phenylalanine + ATP = L-phenylalanyl-tRNA(Phe) + AMP + diphosphate + H(+). The chain is Phenylalanine--tRNA ligase alpha subunit from Xylella fastidiosa (strain M23).